The sequence spans 232 residues: MTTAIVLDIEGTTSPTGAVREDLYGYTRARLPEWLARHRDDAAAPILAATRELAGRPDADTDEVARILREWLGSDVKAEPLKEAQGLICHEGFATGALHGEFFPDVPPALRAWHAAGHRLCVYSSGSLRNQRDWFAHARGGELGSLISAHFDLTTAGPKREAGSYRRIAEALGVEAGQLLFLSDHADELDAAVAAGWSAVGVHRPGEPNPPRPPHRWIGSFDELDLARTPVS.

Belongs to the HAD-like hydrolase superfamily. MasA/MtnC family. As to quaternary structure, monomer. Mg(2+) is required as a cofactor.

It catalyses the reaction 5-methylsulfanyl-2,3-dioxopentyl phosphate + H2O = 1,2-dihydroxy-5-(methylsulfanyl)pent-1-en-3-one + phosphate. Its pathway is amino-acid biosynthesis; L-methionine biosynthesis via salvage pathway; L-methionine from S-methyl-5-thio-alpha-D-ribose 1-phosphate: step 3/6. The protein operates within amino-acid biosynthesis; L-methionine biosynthesis via salvage pathway; L-methionine from S-methyl-5-thio-alpha-D-ribose 1-phosphate: step 4/6. Functionally, bifunctional enzyme that catalyzes the enolization of 2,3-diketo-5-methylthiopentyl-1-phosphate (DK-MTP-1-P) into the intermediate 2-hydroxy-3-keto-5-methylthiopentenyl-1-phosphate (HK-MTPenyl-1-P), which is then dephosphorylated to form the acireductone 1,2-dihydroxy-3-keto-5-methylthiopentene (DHK-MTPene). This is Enolase-phosphatase E1 from Nocardia farcinica (strain IFM 10152).